Here is a 380-residue protein sequence, read N- to C-terminus: Actin-like protein (380 aa).

It belongs to the actin family. ARP1 subfamily.

It is found in the cytoplasm. It localises to the cytoskeleton. Its function is as follows. Involved in nuclear migration. May function as a component of the dynactin complex which activates force generation by cytoplasmic dynein. The chain is Actin-like protein (ro-4) from Neurospora crassa (strain ATCC 24698 / 74-OR23-1A / CBS 708.71 / DSM 1257 / FGSC 987).